A 226-amino-acid polypeptide reads, in one-letter code: Urease accessory protein UreF (226 aa).

It belongs to the UreF family. UreD, UreF and UreG form a complex that acts as a GTP-hydrolysis-dependent molecular chaperone, activating the urease apoprotein by helping to assemble the nickel containing metallocenter of UreC. The UreE protein probably delivers the nickel.

Its subcellular location is the cytoplasm. Required for maturation of urease via the functional incorporation of the urease nickel metallocenter. The polypeptide is Urease accessory protein UreF (Corynebacterium glutamicum (strain R)).